We begin with the raw amino-acid sequence, 318 residues long: NAD(P)H-dependent D-xylose reductase (318 aa).

Y48 acts as the Proton donor in catalysis. H110 provides a ligand contact to substrate. Residues 165-166 (SN), 214-223 (SSFGPQSFVE), and 270-280 (KSNTVPRLLEN) contribute to the NAD(+) site.

This sequence belongs to the aldo/keto reductase family.

The catalysed reaction is xylitol + NAD(+) = D-xylose + NADH + H(+). The enzyme catalyses xylitol + NADP(+) = D-xylose + NADPH + H(+). The protein operates within carbohydrate metabolism; D-xylose degradation. With respect to regulation, NADP(+) is a potent inhibitor of both the NADPH- and NADH-linked xylose reduction, whereas NAD(+) showS strong inhibition only with the NADH-linked reaction. Functionally, reduces D-xylose into xylitol. Has a preference for NADPH, but can also utilize NADH as cosubstrate. The protein is NAD(P)H-dependent D-xylose reductase (XYL1) of Scheffersomyces stipitis (strain ATCC 58785 / CBS 6054 / NBRC 10063 / NRRL Y-11545) (Yeast).